Here is a 104-residue protein sequence, read N- to C-terminus: L-rhamnose mutarotase (104 aa).

Substrate is bound at residue tyrosine 18. Residue histidine 22 is the Proton donor of the active site. Substrate-binding positions include tyrosine 41 and 76–77 (WW).

Belongs to the rhamnose mutarotase family. In terms of assembly, homodimer.

The protein localises to the cytoplasm. It carries out the reaction alpha-L-rhamnose = beta-L-rhamnose. The protein operates within carbohydrate metabolism; L-rhamnose metabolism. Its function is as follows. Involved in the anomeric conversion of L-rhamnose. The protein is L-rhamnose mutarotase of Cronobacter sakazakii (strain ATCC BAA-894) (Enterobacter sakazakii).